We begin with the raw amino-acid sequence, 106 residues long: Translation initiation factor 1A 2 (106 aa).

A disordered region spans residues 1 to 24 (MRKRREGTANNSPTPEVTRVRTPR). The S1-like domain maps to 18–92 (TRVRTPRKEN…SKADVIWKYT (75 aa)).

This sequence belongs to the eIF-1A family.

Its function is as follows. Seems to be required for maximal rate of protein biosynthesis. Enhances ribosome dissociation into subunits and stabilizes the binding of the initiator Met-tRNA(I) to 40 S ribosomal subunits. The sequence is that of Translation initiation factor 1A 2 (eIF1A2) from Methanosarcina mazei (strain ATCC BAA-159 / DSM 3647 / Goe1 / Go1 / JCM 11833 / OCM 88) (Methanosarcina frisia).